Reading from the N-terminus, the 695-residue chain is Zinc finger SWIM domain-containing protein 3 (695 aa).

Residues 434–490 (NAPKLRRTRLPSTPPRPKKPFRICGGGDTRLPVEEVEETKADSAQSQLPQPQDQSSK) are disordered. Residues 475 to 489 (DSAQSQLPQPQDQSS) are compositionally biased toward low complexity. Residues 530 to 571 (VAVQLLENSHQVSKDGCSCSCSFQQCYHLPCRHILALLHTSQ) form an SWIM-type zinc finger.

This chain is Zinc finger SWIM domain-containing protein 3 (Zswim3), found in Mus musculus (Mouse).